The chain runs to 760 residues: Dipeptidyl peptidase 4 (760 aa).

The Cytoplasmic segment spans residues 1–6 (MKTPWK). Residues 7-28 (VLLGLLGVAALVTIITVPIVLL) form a helical; Signal-anchor for type II membrane protein membrane-spanning segment. The Extracellular segment spans residues 29-760 (SKDEAAADSR…HFLQQCFSLH (732 aa)). N-linked (GlcNAc...) asparagine glycans are attached at residues Asn83, Asn90, Asn144, Asn213, Asn223, Asn315, and Asn328. Intrachain disulfides connect Cys322-Cys333, Cys379-Cys388, Cys438-Cys441, and Cys448-Cys466. A glycan (N-linked (GlcNAc...) asparagine) is linked at Asn514. Ser624 (charge relay system) is an active-site residue. Cys643 and Cys756 are oxidised to a cystine. The N-linked (GlcNAc...) asparagine glycan is linked to Asn679. Residues Asp702 and His734 each act as charge relay system in the active site.

It belongs to the peptidase S9B family. DPPIV subfamily. As to quaternary structure, monomer. Homodimer. Heterodimer with Seprase (FAP). Requires homodimerization for optimal dipeptidyl peptidase activity and T-cell costimulation. Found in a membrane raft complex, at least composed of BCL10, CARD11, DPP4 and IKBKB. Associates with collagen. Interacts with PTPRC; the interaction is enhanced in an interleukin-12-dependent manner in activated lymphocytes. Interacts (via extracellular domain) with ADA; does not inhibit its dipeptidyl peptidase activity. Interacts with CAV1 (via the N-terminus); the interaction is direct. Interacts (via cytoplasmic tail) with CARD11 (via PDZ domain); its homodimerization is necessary for interaction with CARD11. Interacts with IGF2R; the interaction is direct. Interacts with GPC3. The soluble form (Dipeptidyl peptidase 4 soluble form also named SDPP) derives from the membrane form (Dipeptidyl peptidase 4 membrane form also named MDPP) by proteolytic processing. Post-translationally, N- and O-Glycosylated. In terms of processing, phosphorylated. Mannose 6-phosphate residues in the carbohydrate moiety are necessary for interaction with IGF2R in activated T-cells. Mannose 6-phosphorylation is induced during T-cell activation.

It is found in the secreted. Its subcellular location is the cell membrane. The protein resides in the apical cell membrane. It localises to the cell projection. The protein localises to the invadopodium membrane. It is found in the lamellipodium membrane. Its subcellular location is the cell junction. The protein resides in the membrane raft. It carries out the reaction Release of an N-terminal dipeptide, Xaa-Yaa-|-Zaa-, from a polypeptide, preferentially when Yaa is Pro, provided Zaa is neither Pro nor hydroxyproline.. With respect to regulation, inhibited by GPC3 and diprotin A. Its function is as follows. Cell surface glycoprotein receptor involved in the costimulatory signal essential for T-cell receptor (TCR)-mediated T-cell activation. Acts as a positive regulator of T-cell coactivation, by binding at least ADA, CAV1, IGF2R, and PTPRC. Its binding to CAV1 and CARD11 induces T-cell proliferation and NF-kappa-B activation in a T-cell receptor/CD3-dependent manner. Its interaction with ADA also regulates lymphocyte-epithelial cell adhesion. In association with FAP is involved in the pericellular proteolysis of the extracellular matrix (ECM), the migration and invasion of endothelial cells into the ECM. May be involved in the promotion of lymphatic endothelial cells adhesion, migration and tube formation. When overexpressed, enhanced cell proliferation, a process inhibited by GPC3. Also acts as a serine exopeptidase with a dipeptidyl peptidase activity that regulates various physiological processes by cleaving peptides in the circulation, including many chemokines, mitogenic growth factors, neuropeptides and peptide hormones. Removes N-terminal dipeptides sequentially from polypeptides having unsubstituted N-termini provided that the penultimate residue is proline. The sequence is that of Dipeptidyl peptidase 4 (Dpp4) from Mus musculus (Mouse).